Consider the following 76-residue polypeptide: Dermaseptin-S7 (76 aa).

A signal peptide spans 1–22 (MDILKKSLFLVLFLGLISLSFC). A propeptide spanning residues 23–45 (EEEKRENEDEEEQEDDEQSEEKR) is cleaved from the precursor. Residues 25–45 (EKRENEDEEEQEDDEQSEEKR) are disordered. Residues 30–41 (EDEEEQEDDEQS) are compositionally biased toward acidic residues. Glutamine amide is present on Q73. A propeptide spanning residues 75–76 (EQ) is cleaved from the precursor.

It belongs to the frog skin active peptide (FSAP) family. Dermaseptin subfamily. As to expression, expressed by the skin glands.

It is found in the secreted. Antimicrobial peptide. The sequence is that of Dermaseptin-S7 from Phyllomedusa sauvagei (Sauvage's leaf frog).